We begin with the raw amino-acid sequence, 138 residues long: Large ribosomal subunit protein uL16 (138 aa).

The segment covering 1–16 (MLIPRKVAHRKQHHPG) has biased composition (basic residues). Positions 1–24 (MLIPRKVAHRKQHHPGRTGAAKGG) are disordered.

The protein belongs to the universal ribosomal protein uL16 family. Part of the 50S ribosomal subunit.

Binds 23S rRNA and is also seen to make contacts with the A and possibly P site tRNAs. The polypeptide is Large ribosomal subunit protein uL16 (Frankia alni (strain DSM 45986 / CECT 9034 / ACN14a)).